Here is a 405-residue protein sequence, read N- to C-terminus: Probable tRNA sulfurtransferase (405 aa).

In terms of domain architecture, THUMP spans 60–165; it reads DQVMARLSQV…REAIYLSTKT (106 aa). ATP is bound by residues 183 to 184, 208 to 209, arginine 265, glycine 287, and glutamine 296; these read ML and HF.

This sequence belongs to the ThiI family.

It localises to the cytoplasm. The catalysed reaction is [ThiI sulfur-carrier protein]-S-sulfanyl-L-cysteine + a uridine in tRNA + 2 reduced [2Fe-2S]-[ferredoxin] + ATP + H(+) = [ThiI sulfur-carrier protein]-L-cysteine + a 4-thiouridine in tRNA + 2 oxidized [2Fe-2S]-[ferredoxin] + AMP + diphosphate. It carries out the reaction [ThiS sulfur-carrier protein]-C-terminal Gly-Gly-AMP + S-sulfanyl-L-cysteinyl-[cysteine desulfurase] + AH2 = [ThiS sulfur-carrier protein]-C-terminal-Gly-aminoethanethioate + L-cysteinyl-[cysteine desulfurase] + A + AMP + 2 H(+). It participates in cofactor biosynthesis; thiamine diphosphate biosynthesis. Catalyzes the ATP-dependent transfer of a sulfur to tRNA to produce 4-thiouridine in position 8 of tRNAs, which functions as a near-UV photosensor. Also catalyzes the transfer of sulfur to the sulfur carrier protein ThiS, forming ThiS-thiocarboxylate. This is a step in the synthesis of thiazole, in the thiamine biosynthesis pathway. The sulfur is donated as persulfide by IscS. The chain is Probable tRNA sulfurtransferase from Lacticaseibacillus casei (strain BL23) (Lactobacillus casei).